We begin with the raw amino-acid sequence, 251 residues long: CDP-diacylglycerol pyrophosphatase (251 aa).

The chain crosses the membrane as a helical span at residues Ala-4 to Trp-24.

The protein belongs to the Cdh family.

The protein resides in the cell inner membrane. It catalyses the reaction a CDP-1,2-diacyl-sn-glycerol + H2O = a 1,2-diacyl-sn-glycero-3-phosphate + CMP + 2 H(+). It functions in the pathway phospholipid metabolism; CDP-diacylglycerol degradation; phosphatidate from CDP-diacylglycerol: step 1/1. This Escherichia coli (strain SE11) protein is CDP-diacylglycerol pyrophosphatase.